A 643-amino-acid polypeptide reads, in one-letter code: Threonine--tRNA ligase 1 (643 aa).

The 62-residue stretch at 3–64 (DMVKITFPDG…NEDGTVEIIT (62 aa)) folds into the TGS domain. The tract at residues 245-542 (DHRKLGKELK…LIEEHKGALP (298 aa)) is catalytic. 3 residues coordinate Zn(2+): cysteine 338, histidine 389, and histidine 519.

Belongs to the class-II aminoacyl-tRNA synthetase family. Homodimer. Requires Zn(2+) as cofactor.

It is found in the cytoplasm. The enzyme catalyses tRNA(Thr) + L-threonine + ATP = L-threonyl-tRNA(Thr) + AMP + diphosphate + H(+). Its function is as follows. Catalyzes the attachment of threonine to tRNA(Thr) in a two-step reaction: L-threonine is first activated by ATP to form Thr-AMP and then transferred to the acceptor end of tRNA(Thr). Also edits incorrectly charged L-seryl-tRNA(Thr). The protein is Threonine--tRNA ligase 1 (thrS) of Bacillus subtilis (strain 168).